The primary structure comprises 533 residues: (E)-beta-farnesene synthase (533 aa).

D286 and D290 together coordinate Mg(2+). The substrate site is built by D286, D290, R427, and N430. Positions 286–290 (DDMMD) match the DDXXD motif motif. Mg(2+) is bound by residues N430 and E438.

This sequence belongs to the terpene synthase family. Monomer. It depends on Mg(2+) as a cofactor. Mn(2+) is required as a cofactor.

It is found in the cytoplasm. It catalyses the reaction (2E,6E)-farnesyl diphosphate = (E)-beta-farnesene + diphosphate. It carries out the reaction (2E,6E)-farnesyl diphosphate = alpha-copaene + diphosphate. The catalysed reaction is (2E,6E)-farnesyl diphosphate = (1S,5S,6R)-alpha-bergamotene + diphosphate. The enzyme catalyses (2E,6E)-farnesyl diphosphate = (-)-(E)-beta-caryophyllene + diphosphate. It catalyses the reaction (2E,6E)-farnesyl diphosphate = delta-cadinene + diphosphate. It carries out the reaction (2E,6E)-farnesyl diphosphate = (+)-germacrene D + diphosphate. The catalysed reaction is (2E,6E)-farnesyl diphosphate = alpha-zingiberene + diphosphate. The enzyme catalyses (2E,6E)-farnesyl diphosphate = alpha-muurolene + diphosphate. It catalyses the reaction (2E,6E)-farnesyl diphosphate = (S)-beta-bisabolene + diphosphate. It carries out the reaction (2E,6E)-farnesyl diphosphate = beta-sesquiphellandrene + diphosphate. The catalysed reaction is (2E,6E)-farnesyl diphosphate = sesquisabinene A + diphosphate. Its pathway is secondary metabolite biosynthesis; terpenoid biosynthesis. Functionally, sesquiterpene cyclase catalyzing mainly the production of beta-farnesene and alpha-bergamotene in equal amounts from farnesyl diphosphate. Also mediates the biosynthesis of minor sesquiterpene hydrocarbons including alpha-muurolene, beta-bisabolene, zingiberene, sesquiphellandrene, sesquisabinene A, germacrene D, delta-cadinene, alpha-copaene and (E)-beta-caryophyllene. Involved in indirect defense by producing volatile signals attracting natural enemies of herbivores. The sequence is that of (E)-beta-farnesene synthase from Zea mays (Maize).